Reading from the N-terminus, the 317-residue chain is MPMQGAQRRLLGSLNSTPTATPNLGLAANHTGAPCLEVSIPDGLFLSLGLVSLVENVLVVAAIAKNRNLHSPMYCFICCLALSDLLVSGSNMLETAVILLLEAGALATRASVVQQLQNTIDVLTCSSMLCSLCFLGAIAVDRYVSIFYALRYHSIVTLPRARRAIAAIWVASVLSSTLFIAYCDHAAVLLCLVVFFLAMLVLMAVLYVHMLARACQHAQGITRLHKRQLPAHQGFGLRGAATLTILLGIFFLCWGPFFLHLMLVVLCPQHLTCSCIFKNFKVFLTLIICNTIIDPLIYAFRSQELCRTLKEVLLCSW.

The Extracellular segment spans residues 1-37 (MPMQGAQRRLLGSLNSTPTATPNLGLAANHTGAPCLE). An N-linked (GlcNAc...) asparagine glycan is attached at Asn29. The chain crosses the membrane as a helical span at residues 38–63 (VSIPDGLFLSLGLVSLVENVLVVAAI). At 64–72 (AKNRNLHSP) the chain is on the cytoplasmic side. The chain crosses the membrane as a helical span at residues 73–93 (MYCFICCLALSDLLVSGSNML). Residues 94-118 (ETAVILLLEAGALATRASVVQQLQN) lie on the Extracellular side of the membrane. The chain crosses the membrane as a helical span at residues 119–140 (TIDVLTCSSMLCSLCFLGAIAV). The Cytoplasmic segment spans residues 141–163 (DRYVSIFYALRYHSIVTLPRARR). The chain crosses the membrane as a helical span at residues 164–183 (AIAAIWVASVLSSTLFIAYC). The Extracellular portion of the chain corresponds to 184-191 (DHAAVLLC). Residues 192-211 (LVVFFLAMLVLMAVLYVHML) traverse the membrane as a helical segment. Residues 212 to 240 (ARACQHAQGITRLHKRQLPAHQGFGLRGA) are Cytoplasmic-facing. The helical transmembrane segment at 241–266 (ATLTILLGIFFLCWGPFFLHLMLVVL) threads the bilayer. Residues 267-279 (CPQHLTCSCIFKN) are Extracellular-facing. The helical transmembrane segment at 280 to 300 (FKVFLTLIICNTIIDPLIYAF) threads the bilayer. Residues 301–317 (RSQELCRTLKEVLLCSW) lie on the Cytoplasmic side of the membrane. The S-palmitoyl cysteine moiety is linked to residue Cys315.

The protein belongs to the G-protein coupled receptor 1 family. Interacts with MGRN1, but does not undergo MGRN1-mediated ubiquitination; this interaction competes with GNAS-binding and thus inhibits agonist-induced cAMP production. Interacts with OPN3; the interaction results in a decrease in MC1R-mediated cAMP signaling and ultimately a decrease in melanin production in melanocytes.

It is found in the cell membrane. Its function is as follows. Receptor for MSH (alpha, beta and gamma) and ACTH. The activity of this receptor is mediated by G proteins which activate adenylate cyclase. Mediates melanogenesis, the production of eumelanin (black/brown) and phaeomelanin (red/yellow), via regulation of cAMP signaling in melanocytes. The chain is Melanocyte-stimulating hormone receptor (MC1R) from Alouatta palliata (Mantled howler monkey).